Consider the following 203-residue polypeptide: Putative 3-methyladenine DNA glycosylase (203 aa).

This sequence belongs to the DNA glycosylase MPG family.

The protein is Putative 3-methyladenine DNA glycosylase of Clostridium botulinum (strain Loch Maree / Type A3).